Reading from the N-terminus, the 93-residue chain is Small ribosomal subunit protein uS19 (93 aa).

This sequence belongs to the universal ribosomal protein uS19 family.

In terms of biological role, protein S19 forms a complex with S13 that binds strongly to the 16S ribosomal RNA. The chain is Small ribosomal subunit protein uS19 from Campylobacter concisus (strain 13826).